The primary structure comprises 49 residues: Protein 19.5 (49 aa).

Positions 1–23 (MFRLLLNLLRHRVTYRFLVVLCA) are cleaved as a signal peptide.

The polypeptide is Protein 19.5 (Escherichia phage T7 (Bacteriophage T7)).